The primary structure comprises 151 residues: MHIWVDADACPVVIKEILFKAAQRAKVQMTLVANHTMRIPKSSYIDFLQVTQGFDIADNEIVKRLSDNDLVITADIPLAAEAIENGAIALNPRGELYTTENIRARLNMRDFMDSLRSSGVDTGGPPPLNQKDRQAFANNLDRLLTRYARQR.

Positions 116-135 are disordered; that stretch reads RSSGVDTGGPPPLNQKDRQA.

The protein belongs to the UPF0178 family.

The chain is UPF0178 protein Tcr_1995 from Hydrogenovibrio crunogenus (strain DSM 25203 / XCL-2) (Thiomicrospira crunogena).